A 115-amino-acid polypeptide reads, in one-letter code: NAD(P)H-quinone oxidoreductase subunit M (115 aa).

This sequence belongs to the complex I NdhM subunit family. NDH-1 can be composed of about 15 different subunits; different subcomplexes with different compositions have been identified which probably have different functions.

It is found in the cellular thylakoid membrane. It carries out the reaction a plastoquinone + NADH + (n+1) H(+)(in) = a plastoquinol + NAD(+) + n H(+)(out). The catalysed reaction is a plastoquinone + NADPH + (n+1) H(+)(in) = a plastoquinol + NADP(+) + n H(+)(out). In terms of biological role, NDH-1 shuttles electrons from an unknown electron donor, via FMN and iron-sulfur (Fe-S) centers, to quinones in the respiratory and/or the photosynthetic chain. The immediate electron acceptor for the enzyme in this species is believed to be plastoquinone. Couples the redox reaction to proton translocation, and thus conserves the redox energy in a proton gradient. Cyanobacterial NDH-1 also plays a role in inorganic carbon-concentration. The chain is NAD(P)H-quinone oxidoreductase subunit M from Prochlorococcus marinus (strain MIT 9211).